The chain runs to 407 residues: Tryptophan synthase beta chain (407 aa).

Position 86 is an N6-(pyridoxal phosphate)lysine (Lys-86).

This sequence belongs to the TrpB family. As to quaternary structure, tetramer of two alpha and two beta chains. Pyridoxal 5'-phosphate serves as cofactor.

The enzyme catalyses (1S,2R)-1-C-(indol-3-yl)glycerol 3-phosphate + L-serine = D-glyceraldehyde 3-phosphate + L-tryptophan + H2O. It functions in the pathway amino-acid biosynthesis; L-tryptophan biosynthesis; L-tryptophan from chorismate: step 5/5. Functionally, the beta subunit is responsible for the synthesis of L-tryptophan from indole and L-serine. The chain is Tryptophan synthase beta chain from Shewanella woodyi (strain ATCC 51908 / MS32).